Here is a 618-residue protein sequence, read N- to C-terminus: Glutamine--fructose-6-phosphate aminotransferase [isomerizing] (618 aa).

Catalysis depends on cysteine 2, which acts as the Nucleophile; for GATase activity. The Glutamine amidotransferase type-2 domain maps to 2-226 (CGIVGYAGRN…DFETAVLTPD (225 aa)). Positions 72–91 (WATHGRPSTENAHPHNSGGN) are disordered. 2 SIS domains span residues 295 to 434 (NDDE…VRGK) and 467 to 608 (CAEN…IDKP). The active-site For Fru-6P isomerization activity is lysine 613.

As to quaternary structure, homodimer.

It is found in the cytoplasm. The enzyme catalyses D-fructose 6-phosphate + L-glutamine = D-glucosamine 6-phosphate + L-glutamate. Functionally, catalyzes the first step in hexosamine metabolism, converting fructose-6P into glucosamine-6P using glutamine as a nitrogen source. In Methanosarcina mazei (strain ATCC BAA-159 / DSM 3647 / Goe1 / Go1 / JCM 11833 / OCM 88) (Methanosarcina frisia), this protein is Glutamine--fructose-6-phosphate aminotransferase [isomerizing].